A 123-amino-acid chain; its full sequence is Large ribosomal subunit protein uL29 (123 aa).

This sequence belongs to the universal ribosomal protein uL29 family.

This chain is Large ribosomal subunit protein uL29 (RPL35), found in Theileria lestoquardi.